Consider the following 177-residue polypeptide: Large ribosomal subunit protein uL5 (177 aa).

Belongs to the universal ribosomal protein uL5 family. Part of the 50S ribosomal subunit; contacts the 5S rRNA and probably tRNA. Forms a bridge to the 30S subunit in the 70S ribosome.

This is one of the proteins that bind and probably mediate the attachment of the 5S RNA into the large ribosomal subunit, where it forms part of the central protuberance. In the 70S ribosome it contacts protein S13 of the 30S subunit (bridge B1b), connecting the 2 subunits; this bridge is implicated in subunit movement. May contact the P site tRNA; the 5S rRNA and some of its associated proteins might help stabilize positioning of ribosome-bound tRNAs. This chain is Large ribosomal subunit protein uL5, found in Sulfurisphaera tokodaii (strain DSM 16993 / JCM 10545 / NBRC 100140 / 7) (Sulfolobus tokodaii).